Here is a 554-residue protein sequence, read N- to C-terminus: Muellerian-inhibiting factor (554 aa).

The first 24 residues, 1–24, serve as a signal peptide directing secretion; sequence MQGPHLSPLVLLLATMGAVLQPEA. A propeptide spanning residues 25 to 446 is cleaved from the precursor; it reads VENLATNTRG…GREGRGRTGR (422 aa). Asn-62, Asn-326, and Asn-410 each carry an N-linked (GlcNAc...) asparagine glycan. 3 cysteine pairs are disulfide-bonded: Cys-456/Cys-520, Cys-482/Cys-551, and Cys-486/Cys-553.

This sequence belongs to the TGF-beta family. Homodimer; disulfide-linked. Preproprotein is proteolytically processed to generate N- and C-terminal cleavage products that homodimerize and associate to form a biologically active non-covalent complex. Binding of the non-covalent complex to AMHRII induces dissociation of the pro-region from the mature C-terminal dimer. The N-terminal portion of the protein, despite having no intrinsic activity, has the role of amplifying the activity of the C-terminus. As to expression, expressed in Sertoli cells of fetal testes, and in testes just after birth, but absent in adult testes. In female, AMH is expressed after birth in the granulosa cells of the follicle.

It is found in the secreted. Plays an important role in several reproductive functions, including Muellerian duct regression during male fetal sexua,l differentiation and in the adult plays a role in Leydig cell differentiation and function. In female acts as a negative regulator of the primordial to primary follicle transition and decreases FSH sensitivity of growing follicles. Binds to its sole type II receptor, AMHR2 that recruits type I receptors ACVR1 and BMPR1A which subsequently activates the Smad pathway. This Mus musculus (Mouse) protein is Muellerian-inhibiting factor (Amh).